Here is a 92-residue protein sequence, read N- to C-terminus: Conotoxin Ac8.1 (92 aa).

Residues 1–19 (LKMGAMFVLLLLFTLASSQ) form the signal peptide. Residues 20-44 (QEGDVQARKTSLKSDFYRALRQYDR) constitute a propeptide that is removed on maturation. Gln-45 is modified (pyrrolidone carboxylic acid).

Belongs to the conotoxin S superfamily. Post-translationally, contains 5 disulfide bonds. In terms of tissue distribution, expressed by the venom duct.

It localises to the secreted. The sequence is that of Conotoxin Ac8.1 from Conus achatinus (Little frog cone).